The sequence spans 102 residues: ATP-dependent Clp protease adapter protein ClpS (102 aa).

Belongs to the ClpS family. As to quaternary structure, binds to the N-terminal domain of the chaperone ClpA.

In terms of biological role, involved in the modulation of the specificity of the ClpAP-mediated ATP-dependent protein degradation. In Shewanella woodyi (strain ATCC 51908 / MS32), this protein is ATP-dependent Clp protease adapter protein ClpS.